Here is a 289-residue protein sequence, read N- to C-terminus: ATP synthase mitochondrial F1 complex assembly factor 2 (289 aa).

A mitochondrion-targeting transit peptide spans 1–40 (MWRIYPRLRDRWRGLLDRRLSDPTVSVWPGPAPQPPARAY). The residue at position 133 (lysine 133) is an N6-succinyllysine.

This sequence belongs to the ATP12 family. In terms of assembly, interacts with ATP5F1B; involved in the assembly of the F1 component of the mitochondrial ATP synthase (ATPase). Interacts with FMC1.

Its subcellular location is the mitochondrion inner membrane. In terms of biological role, plays a role in the assembly of the F1 component of the mitochondrial ATP synthase (ATPase). This is ATP synthase mitochondrial F1 complex assembly factor 2 from Mus musculus (Mouse).